A 428-amino-acid polypeptide reads, in one-letter code: Serine--tRNA ligase (428 aa).

231-233 (TAE) contacts L-serine. ATP-binding positions include 262-264 (RRE) and Val-278. Glu-285 serves as a coordination point for L-serine. Residue 349–352 (EVSS) participates in ATP binding. L-serine is bound at residue Ser-384.

Belongs to the class-II aminoacyl-tRNA synthetase family. Type-1 seryl-tRNA synthetase subfamily. In terms of assembly, homodimer. The tRNA molecule binds across the dimer.

It is found in the cytoplasm. It carries out the reaction tRNA(Ser) + L-serine + ATP = L-seryl-tRNA(Ser) + AMP + diphosphate + H(+). The enzyme catalyses tRNA(Sec) + L-serine + ATP = L-seryl-tRNA(Sec) + AMP + diphosphate + H(+). The protein operates within aminoacyl-tRNA biosynthesis; selenocysteinyl-tRNA(Sec) biosynthesis; L-seryl-tRNA(Sec) from L-serine and tRNA(Sec): step 1/1. In terms of biological role, catalyzes the attachment of serine to tRNA(Ser). Is also able to aminoacylate tRNA(Sec) with serine, to form the misacylated tRNA L-seryl-tRNA(Sec), which will be further converted into selenocysteinyl-tRNA(Sec). The protein is Serine--tRNA ligase of Chlamydia trachomatis serovar A (strain ATCC VR-571B / DSM 19440 / HAR-13).